Here is a 569-residue protein sequence, read N- to C-terminus: Urease subunit beta (569 aa).

One can recognise a Urease domain in the interval 131–569; the sequence is GGIDTHIHFI…VSLAQLFSIF (439 aa). His136, His138, and Lys219 together coordinate Ni(2+). Lys219 is subject to N6-carboxylysine. Substrate is bound at residue His221. Positions 248 and 274 each coordinate Ni(2+). Catalysis depends on His322, which acts as the Proton donor. Asp362 is a Ni(2+) binding site.

It belongs to the metallo-dependent hydrolases superfamily. Urease alpha subunit family. In terms of assembly, heterohexamer of 3 UreA (alpha) and 3 UreB (beta) subunits. Requires Ni cation as cofactor. Carboxylation allows a single lysine to coordinate two nickel ions.

Its subcellular location is the cytoplasm. The catalysed reaction is urea + 2 H2O + H(+) = hydrogencarbonate + 2 NH4(+). It functions in the pathway nitrogen metabolism; urea degradation; CO(2) and NH(3) from urea (urease route): step 1/1. The sequence is that of Urease subunit beta from Helicobacter pylori (strain Shi470).